Consider the following 805-residue polypeptide: Phosphoinositide 3-kinase adapter protein 1 (805 aa).

The region spanning 8–145 (RGCDILIVYS…AVKKAISEDS (138 aa)) is the TIR domain. The interval 10-144 (CDILIVYSPD…AAVKKAISED (135 aa)) is necessary and sufficient to mediate inhibition of NF-kappa-B downstream of activated TLRs; may mediate interaction with MYD88 and TIRAP. The segment at 145-165 (SGCDSVTDTEPEDEKVVSYSK) is disordered. One can recognise a DBB domain in the interval 181–317 (VQPDRIRCGA…NIPASGLHLF (137 aa)). Position 263 is a phosphotyrosine (Tyr263). Residues Tyr419, Tyr444, and Tyr459 each carry the phosphotyrosine; by SYK modification. At Tyr513 the chain carries Phosphotyrosine; by ABL1. The disordered stretch occupies residues 527–547 (ASRPPVPVPRPETTAPGAHQL). Phosphotyrosine; by ABL1 occurs at positions 553 and 570. The segment at 571–590 (VSSESIRKGPPVRPWRDRPQ) is disordered. Position 594 is a phosphotyrosine; by ABL1 (Tyr594). Ser642 is subject to Phosphoserine. A coiled-coil region spans residues 645–667 (FQQENLKRLRDSITRRQREKQKS). The segment covering 654 to 672 (RDSITRRQREKQKSGKQTD) has biased composition (basic and acidic residues). Residues 654–679 (RDSITRRQREKQKSGKQTDLEITVPI) are disordered. Phosphotyrosine; by ABL1 is present on Tyr694. A disordered region spans residues 697–805 (GPRKSVIPPR…PPPPVPPRGR (109 aa)). The span at 707 to 716 (TELRRGDWKT) shows a compositional bias: basic and acidic residues. Positions 717–740 (DSTSSTASSTSNRSSTRSLLSVSS) are enriched in low complexity. A Phosphoserine modification is found at Ser718. The span at 795 to 805 (HPPPPVPPRGR) shows a compositional bias: pro residues.

In terms of assembly, homooligomer. Interacts (phosphorylated on tyrosine residues within YXXM motifs) with PIK3R1 (via SH2 domain); required for BCR- and TLR-mediated activation of phosphoinositide 3-kinase. Interacts (via polyproline C-terminal region) with ABI1 (via SH3 domain); the interaction promotes phosphorylation of PIK3AP1 by ABL1. May interact with MYD88 and TIRAP. Constitutively phosphorylated. Phosphorylated on tyrosine residues in C-terminal region by ABL1. Phosphorylated on tyrosine residues within the YXXM motifs by BTK and SYK. Isoform 1 and isoform 2 are phosphorylated on tyrosine residues, most likely within the YXXM motifs, via CD19 activation. Toll-like receptor activation induces appearance of a phosphorylated form associated with membranes. In terms of tissue distribution, expressed in natural killer (NK) cells.

The protein resides in the cytoplasm. It is found in the cell membrane. Signaling adapter that contributes to B-cell development by linking B-cell receptor (BCR) signaling to the phosphoinositide 3-kinase (PI3K)-Akt signaling pathway. Has a complementary role to the BCR coreceptor CD19, coupling BCR and PI3K activation by providing a docking site for the PI3K subunit PIK3R1. Alternatively, links Toll-like receptor (TLR) signaling to PI3K activation, a process preventing excessive inflammatory cytokine production. Also involved in the activation of PI3K in natural killer cells. May be involved in the survival of mature B-cells via activation of REL. The sequence is that of Phosphoinositide 3-kinase adapter protein 1 (PIK3AP1) from Homo sapiens (Human).